A 445-amino-acid polypeptide reads, in one-letter code: Phosphoglucosamine mutase (445 aa).

The active-site Phosphoserine intermediate is Ser102. Mg(2+)-binding residues include Ser102, Asp241, Asp243, and Asp245. Ser102 carries the post-translational modification Phosphoserine.

The protein belongs to the phosphohexose mutase family. Mg(2+) is required as a cofactor. In terms of processing, activated by phosphorylation.

It carries out the reaction alpha-D-glucosamine 1-phosphate = D-glucosamine 6-phosphate. Functionally, catalyzes the conversion of glucosamine-6-phosphate to glucosamine-1-phosphate. This chain is Phosphoglucosamine mutase, found in Salmonella choleraesuis (strain SC-B67).